Reading from the N-terminus, the 179-residue chain is Natural killer cells antigen CD94 (179 aa).

Over 1-10 (MAVSQTTLWN) the chain is Cytoplasmic. The chain crosses the membrane as a helical; Signal-anchor for type II membrane protein span at residues 11-31 (LISGILGVICLLLMTTMGILL). Over 32–179 (KNLLLTESIQ…SRFICKQELM (148 aa)) the chain is Extracellular. 4 disulfides stabilise this stretch: Cys-58/Cys-70, Cys-61/Cys-72, Cys-89/Cys-174, and Cys-152/Cys-166. Residues 68–175 (HQCNCYLFFD…CEDKSRFICK (108 aa)) enclose the C-type lectin domain. 2 N-linked (GlcNAc...) asparagine glycosylation sites follow: Asn-93 and Asn-125.

Can form disulfide-bonded heterodimer with NKG2 family members KLRC1 and KLRC2. KLRD1-KLRC1 heterodimer interacts with peptide-bound MHC-E-B2M heterotrimeric complex. KLRD1 plays a prominent role in directly interacting with MHC-E. KLRD1-KLRC1 interacts with much higher affinity with peptide-bound MHC-E-B2M than KLRD1-KLRC2. Interacts with the adapter protein TYROBP/DAP12; this interaction is required for cell surface expression and cell activation.

It localises to the cell membrane. Immune receptor involved in self-nonself discrimination. In complex with KLRC1 or KLRC2 on cytotoxic and regulatory lymphocyte subsets, recognizes non-classical major histocompatibility (MHC) class Ib molecule MHC-E loaded with self-peptides derived from the signal sequence of classical MHC class Ia and non-classical MHC class Ib molecules. Enables cytotoxic cells to monitor the expression of MHC class I molecules in healthy cells and to tolerate self. Primarily functions as a ligand binding subunit as it lacks the capacity to signal. Functionally, KLRD1-KLRC1 acts as an immune inhibitory receptor. Key inhibitory receptor on natural killer (NK) cells that regulates their activation and effector functions. Dominantly counteracts T cell receptor signaling on a subset of memory/effector CD8-positive T cells as part of an antigen-driven response to avoid autoimmunity. On intraepithelial CD8-positive gamma-delta regulatory T cells triggers TGFB1 secretion, which in turn limits the cytotoxic programming of intraepithelial CD8-positive alpha-beta T cells, distinguishing harmless from pathogenic antigens. In MHC-E-rich tumor microenvironment, acts as an immune inhibitory checkpoint and may contribute to progressive loss of effector functions of NK cells and tumor-specific T cells, a state known as cell exhaustion. Upon MHC-E-peptide binding, transmits intracellular signals through KLRC1 immunoreceptor tyrosine-based inhibition motifs (ITIMs) by recruiting INPP5D/SHIP-1 and INPPL1/SHIP-2 tyrosine phosphatases to ITIMs, and ultimately opposing signals transmitted by activating receptors through dephosphorylation of proximal signaling molecules. Its function is as follows. KLRD1-KLRC2 acts as an immune activating receptor. On cytotoxic lymphocyte subsets recognizes MHC-E loaded with signal sequence-derived peptides from non-classical MHC class Ib MHC-G molecules, likely playing a role in the generation and effector functions of adaptive NK cells and in maternal-fetal tolerance during pregnancy. Regulates the effector functions of terminally differentiated cytotoxic lymphocyte subsets, and in particular may play a role in adaptive NK cell response to viral infection. Upon MHC-E-peptide binding, transmits intracellular signals via the adapter protein TYROBP/DAP12, triggering the phosphorylation of proximal signaling molecules and cell activation. In Canis lupus familiaris (Dog), this protein is Natural killer cells antigen CD94 (KLRD1).